We begin with the raw amino-acid sequence, 501 residues long: Lysine--tRNA ligase (501 aa).

Glu404 and Glu411 together coordinate Mg(2+).

The protein belongs to the class-II aminoacyl-tRNA synthetase family. As to quaternary structure, homodimer. Mg(2+) serves as cofactor.

Its subcellular location is the cytoplasm. The catalysed reaction is tRNA(Lys) + L-lysine + ATP = L-lysyl-tRNA(Lys) + AMP + diphosphate. The polypeptide is Lysine--tRNA ligase (lysS) (Campylobacter jejuni subsp. jejuni serotype O:2 (strain ATCC 700819 / NCTC 11168)).